Consider the following 263-residue polypeptide: MAFGDDDILSIPFKYFVICIGGLPSSALLICVILSLLLHFDQATSTHCEVANWLPSISAAVSTYTPEKYIWRILIGLHIGPRLVVAIAFRNFLLGSPLRPLTGHKRLRFLCNLACFLNLLENFFLLALTSISSSEDHSLHAKCFGGFAICSIIYMLLSTWLFNETGRRTATNLGQRSHEYKILGAAIFVLCFFLGAYLYWRHNTYCEPGIYTLFALVEYSAVLSNIFFHCTLYYDFHGKNIVLTSSFGGGHYNLLPTQIDKDT.

6 helical membrane-spanning segments follow: residues 16–36 (FVIC…ILSL), 69–89 (YIWR…AIAF), 109–129 (FLCN…LALT), 143–163 (CFGG…WLFN), 180–200 (YKIL…YLYW), and 208–228 (PGIY…NIFF).

The protein belongs to the PGAP2 family.

It localises to the golgi apparatus membrane. Its subcellular location is the endoplasmic reticulum membrane. Functionally, involved in the lipid remodeling steps of GPI-anchor maturation. Required for stable expression of GPI-anchored proteins at the cell surface. This Caenorhabditis elegans protein is Post-GPI attachment to proteins factor 2.